We begin with the raw amino-acid sequence, 533 residues long: Glucose-6-phosphate isomerase (533 aa).

Catalysis depends on glutamate 341, which acts as the Proton donor. Catalysis depends on residues histidine 372 and lysine 501.

This sequence belongs to the GPI family.

It is found in the cytoplasm. It carries out the reaction alpha-D-glucose 6-phosphate = beta-D-fructose 6-phosphate. Its pathway is carbohydrate biosynthesis; gluconeogenesis. The protein operates within carbohydrate degradation; glycolysis; D-glyceraldehyde 3-phosphate and glycerone phosphate from D-glucose: step 2/4. Its function is as follows. Catalyzes the reversible isomerization of glucose-6-phosphate to fructose-6-phosphate. This chain is Glucose-6-phosphate isomerase, found in Cereibacter sphaeroides (strain ATCC 17029 / ATH 2.4.9) (Rhodobacter sphaeroides).